The following is a 59-amino-acid chain: MDTRLLDILVCPLCKGPLEHDKKKQELICKVDKLAYPIRDGIPIMWADQARDLQTPAAG.

This sequence belongs to the UPF0434 family.

The chain is UPF0434 protein HEAR2489 from Herminiimonas arsenicoxydans.